Reading from the N-terminus, the 342-residue chain is uncharacterized protein (342 aa).

In terms of domain architecture, Nudix hydrolase spans 155-309 (TYGIHINGYV…KPNCALVMVD (155 aa)).

This is an uncharacterized protein from Saccharomyces cerevisiae (strain ATCC 204508 / S288c) (Baker's yeast).